A 625-amino-acid chain; its full sequence is MSDIIHLLPDSVANQIAAGEVIQRPASVIKELVENAIDAEAQNIHVLVTDAGKTCIQVIDDGKGMSETDARLSFERHATSKIREASDLFALRTMGFRGEALASIAAVAQVELKTRPESEELGTKIIIAGSKVESQEAVSCPKGSNFSIKNLFFNIPARRKFLKANSTELSNILAEFERIALVHPEVAFSLYSNDSELFNLPACHLRQRILSVFGKKLNQQLLSVEVNTTMVKVSGYVAKPETARKKGAHQYFFVNGRYMRHPYFHKAVMDAYEQLIPAGEQISYFIYFEVDPANIDVNIHPTKTEIKFENEQAIWQILSASIKESLGKFNAVPSIDFDTEDMPDIPAFEQNLPPAPPKVHFNSDFNPFKPSSSSGGGNYSRPKVDWEDLYGGLEKASKMNQPFSDSDPESEEFAVIEEESIATAAPETLYAGELAVIEKGTQHLQFKGRFILTSVKSGLMLIDQHRAHIRVLFDRYRAQIQQKQGFSQGVLFPEILQLPASEAAVLQSIMDDLSAVGFDLSDLGGGSYAINGVPSGIDGLNPVDLVRSMLHTAMEKGNDVKEEIQDILALTLARAAAIVYGQVLSNEEMVSLVDNLFACPSPNYTPDGRVVLTTIKEEEIDKLFR.

It belongs to the DNA mismatch repair MutL/HexB family.

In terms of biological role, this protein is involved in the repair of mismatches in DNA. It is required for dam-dependent methyl-directed DNA mismatch repair. May act as a 'molecular matchmaker', a protein that promotes the formation of a stable complex between two or more DNA-binding proteins in an ATP-dependent manner without itself being part of a final effector complex. The protein is DNA mismatch repair protein MutL of Bacteroides fragilis (strain YCH46).